Here is a 414-residue protein sequence, read N- to C-terminus: Serine hydroxymethyltransferase (414 aa).

(6S)-5,6,7,8-tetrahydrofolate contacts are provided by residues L116 and 120-122 (GHL). K224 bears the N6-(pyridoxal phosphate)lysine mark. Residues E240 and 348 to 350 (SPF) each bind (6S)-5,6,7,8-tetrahydrofolate.

This sequence belongs to the SHMT family. In terms of assembly, homodimer. Pyridoxal 5'-phosphate is required as a cofactor.

The protein resides in the cytoplasm. The enzyme catalyses (6R)-5,10-methylene-5,6,7,8-tetrahydrofolate + glycine + H2O = (6S)-5,6,7,8-tetrahydrofolate + L-serine. The protein operates within one-carbon metabolism; tetrahydrofolate interconversion. It participates in amino-acid biosynthesis; glycine biosynthesis; glycine from L-serine: step 1/1. In terms of biological role, catalyzes the reversible interconversion of serine and glycine with tetrahydrofolate (THF) serving as the one-carbon carrier. This reaction serves as the major source of one-carbon groups required for the biosynthesis of purines, thymidylate, methionine, and other important biomolecules. Also exhibits THF-independent aldolase activity toward beta-hydroxyamino acids, producing glycine and aldehydes, via a retro-aldol mechanism. The polypeptide is Serine hydroxymethyltransferase (Campylobacter fetus subsp. fetus (strain 82-40)).